Consider the following 551-residue polypeptide: Periplasmic [NiFe] hydrogenase large subunit (551 aa).

Cys65, Cys68, Cys530, and Cys533 together coordinate Ni(2+). Positions 537-551 (VIDPESNQVHKFRIL) are excised as a propeptide.

The protein belongs to the [NiFe]/[NiFeSe] hydrogenase large subunit family. As to quaternary structure, heterodimer of a large and a small subunit. Ni(2+) serves as cofactor.

Its subcellular location is the periplasm. The catalysed reaction is 2 Fe(III)-[cytochrome c3] + H2 = 2 Fe(II)-[cytochrome c3] + 2 H(+). This Megalodesulfovibrio gigas (Desulfovibrio gigas) protein is Periplasmic [NiFe] hydrogenase large subunit (hydB).